We begin with the raw amino-acid sequence, 596 residues long: Histone deacetylase 9 (596 aa).

Basic and acidic residues-rich tracts occupy residues 132-153 and 160-172; these read REKE…HRQE and RSKD…AVAS. Disordered stretches follow at residues 132–172, 214–258, 293–313, and 522–596; these read REKE…AVAS, HTSL…VRSR, SSVS…GPVA, and QPEG…QQVT. An interaction with mef2 region spans residues 172–222; that stretch reads STEVKQKLQEFILSKSATKEPLTNGTSHSMGRHPKLWYTAAHHTSLDQSSP. Positions 221 to 237 are enriched in pro residues; sequence SPPPSGTSPTYKCPPPG. The span at 293–312 shows a compositional bias: low complexity; sequence SSVSSSSPVSGPSSPNNGPV. The segment covering 522–536 has biased composition (basic and acidic residues); that stretch reads QPEGHLEEAEEDLHG. A compositionally biased stretch (polar residues) spans 541–558; that stretch reads QEKSSSIDNTRSYSSTDL. Over residues 567-585 the composition is skewed to basic and acidic residues; the sequence is KVKEEPPDSENEIKTHLQS. The span at 586 to 596 shows a compositional bias: polar residues; sequence EQKSVFAQQVT.

The protein belongs to the histone deacetylase family. HD type 2 subfamily. Homodimer. Interacts with mef2. Broadly expressed.

It localises to the nucleus. The catalysed reaction is N(6)-acetyl-L-lysyl-[histone] + H2O = L-lysyl-[histone] + acetate. Functionally, devoided of intrinsic deacetylase activity, promotes the deacetylation of lysine residues on the N-terminal part of the core histones (H2A, H2B, H3 and H4) by recruiting other histone deacetylases. Histone deacetylation gives a tag for epigenetic repression and plays an important role in transcriptional regulation, cell cycle progression and developmental events. Represses MEF2-dependent transcription. This is Histone deacetylase 9 (hdac9) from Xenopus laevis (African clawed frog).